The sequence spans 139 residues: Ribulose bisphosphate carboxylase small subunit (139 aa).

The protein belongs to the RuBisCO small chain family. Heterohexadecamer of 8 large and 8 small subunits.

Its subcellular location is the plastid. The protein localises to the chloroplast. In terms of biological role, ruBisCO catalyzes two reactions: the carboxylation of D-ribulose 1,5-bisphosphate, the primary event in carbon dioxide fixation, as well as the oxidative fragmentation of the pentose substrate in the photorespiration process. Both reactions occur simultaneously and in competition at the same active site. Although the small subunit is not catalytic it is essential for maximal activity. In Olisthodiscus luteus (Marine phytoflagellate), this protein is Ribulose bisphosphate carboxylase small subunit.